The chain runs to 239 residues: Riboflavin synthase (239 aa).

Lumazine-binding repeat units follow at residues 1–105 (MFTG…MGGH) and 106–205 (VVQG…EKQI). 2,4-dihydroxypteridine-binding positions include 4–6 (GLV), 54–56 (CLT), 70–75 (GISPET), 109–111 (GHV), lysine 145, 154–156 (SLT), and 170–175 (SMVSYT).

In terms of assembly, homotrimer.

It carries out the reaction 2 6,7-dimethyl-8-(1-D-ribityl)lumazine + H(+) = 5-amino-6-(D-ribitylamino)uracil + riboflavin. Its pathway is cofactor biosynthesis; riboflavin biosynthesis; riboflavin from 2-hydroxy-3-oxobutyl phosphate and 5-amino-6-(D-ribitylamino)uracil: step 2/2. Functionally, catalyzes the dismutation of two molecules of 6,7-dimethyl-8-ribityllumazine, resulting in the formation of riboflavin and 5-amino-6-(D-ribitylamino)uracil. This Meyerozyma guilliermondii (strain ATCC 6260 / CBS 566 / DSM 6381 / JCM 1539 / NBRC 10279 / NRRL Y-324) (Yeast) protein is Riboflavin synthase (RIB5).